We begin with the raw amino-acid sequence, 142 residues long: Immunoglobulin iota chain (142 aa).

The signal sequence occupies residues 1 to 19 (MAWTSVLLMLLAYLTGCGP). A framework-1 region spans residues 20–41 (QPMVHQPPLASSSLGATIRLSC). Cysteines 41 and 115 form a disulfide. Residues 42 to 56 (TLSNDHNIGIYSIYW) form a complementarity-determining-1 region. Residues 57–70 (YQQRPGHPPRFLLR) are framework-2. The complementarity-determining-2 stretch occupies residues 71 to 81 (YFSHSDKHQGP). The segment at 82–115 (DIPPRFSGSKDTTRNLGYLSISELQPEDEAVYYC) is framework-3.

This sequence belongs to the immunoglobulin superfamily. As to quaternary structure, interacts with IGLL1. Interacts with SYNV1/HRD1 (via N-terminus); this interaction leads to increased VPREB1A ubiquitination and degradation in pre-B cells, possibly through a lysosomal, not proteasomal, pathway. As to expression, only expressed by pre-B-cells.

Its subcellular location is the endoplasmic reticulum. Associates with the Ig-mu chain to form a molecular complex that is expressed on the surface of pre-B-cells. This complex presumably regulates Ig gene rearrangements in the early steps of B-cell differentiation. The polypeptide is Immunoglobulin iota chain (Mus musculus (Mouse)).